Here is a 197-residue protein sequence, read N- to C-terminus: Nucleoside triphosphate pyrophosphatase (197 aa).

The active-site Proton acceptor is the Asp75.

Belongs to the Maf family. A divalent metal cation serves as cofactor.

The protein localises to the cytoplasm. It catalyses the reaction a ribonucleoside 5'-triphosphate + H2O = a ribonucleoside 5'-phosphate + diphosphate + H(+). The enzyme catalyses a 2'-deoxyribonucleoside 5'-triphosphate + H2O = a 2'-deoxyribonucleoside 5'-phosphate + diphosphate + H(+). Nucleoside triphosphate pyrophosphatase. May have a dual role in cell division arrest and in preventing the incorporation of modified nucleotides into cellular nucleic acids. The sequence is that of Nucleoside triphosphate pyrophosphatase from Haemophilus ducreyi (strain 35000HP / ATCC 700724).